Reading from the N-terminus, the 198-residue chain is ATP-dependent Clp protease proteolytic subunit 2 (198 aa).

Residue Ser-94 is the Nucleophile of the active site. The active site involves His-119.

Belongs to the peptidase S14 family. Fourteen ClpP subunits assemble into 2 heptameric rings which stack back to back to give a disk-like structure with a central cavity, resembling the structure of eukaryotic proteasomes.

Its subcellular location is the cytoplasm. The enzyme catalyses Hydrolysis of proteins to small peptides in the presence of ATP and magnesium. alpha-casein is the usual test substrate. In the absence of ATP, only oligopeptides shorter than five residues are hydrolyzed (such as succinyl-Leu-Tyr-|-NHMec, and Leu-Tyr-Leu-|-Tyr-Trp, in which cleavage of the -Tyr-|-Leu- and -Tyr-|-Trp bonds also occurs).. In terms of biological role, cleaves peptides in various proteins in a process that requires ATP hydrolysis. Has a chymotrypsin-like activity. Plays a major role in the degradation of misfolded proteins. This Borreliella burgdorferi (strain ATCC 35210 / DSM 4680 / CIP 102532 / B31) (Borrelia burgdorferi) protein is ATP-dependent Clp protease proteolytic subunit 2.